The sequence spans 300 residues: Merozoite surface protein 2 (300 aa).

Positions 1 to 20 (MKVIKTLSIINFFIFVTFNI) are cleaved as a signal peptide. N-linked (GlcNAc...) asparagine glycosylation is found at Asn-22 and Asn-36. A polymorphic region region spans residues 44–226 (EESKPPTGAV…EQTESPELQS (183 aa)). One copy of the 1; inverted repeat lies at 51 to 58 (GAVAGSGA). The tract at residues 51 to 74 (GAVAGSGAGAGSGAGAVAGSGAGA) is 7 X 8 AA tandem repeats of G-S-G-A-G-A-V-A. 5 tandem repeats follow at residues 61 to 68 (GSGAGAVA), 69 to 76 (GSGAGAVA), 77 to 84 (GSGAGAVA), 85 to 92 (GSGAGAVA), and 93 to 100 (GSGAGAVA). The stretch at 103-110 (GAVAGSGA) is one 7; inverted repeat. The segment at 111–261 (GNGANPGADA…DSQKECTDGN (151 aa)) is disordered. A compositionally biased stretch (low complexity) spans 124-148 (PSTPATTTTTTTTNDAEASTSTSSE). A compositionally biased stretch (basic and acidic residues) spans 149–165 (NRNHNNAETNPKGKGEV). 2 stretches are compositionally biased toward polar residues: residues 167–193 (KPNQ…NVPR) and 200–228 (KSPT…QSAP). N-linked (GlcNAc...) asparagine glycosylation occurs at Asn-177. An N-linked (GlcNAc...) asparagine glycan is attached at Asn-249. A disulfide bridge links Cys-257 with Cys-265. Asn-273 and Asn-274 each carry an N-linked (GlcNAc...) asparagine glycan. Asn-274 carries GPI-anchor amidated asparagine lipidation. Residues 275 to 300 (SSNIASINKFVVLISATLVLSFAIFI) constitute a propeptide, removed in mature form.

It localises to the cell membrane. May play a role in the merozoite attachment to the erythrocyte. This chain is Merozoite surface protein 2, found in Plasmodium falciparum (isolate mad71 / Papua New Guinea).